A 169-amino-acid chain; its full sequence is Transcription antitermination protein NusB (169 aa).

Positions M1–K19 are enriched in basic and acidic residues. The tract at residues M1 to R22 is disordered.

Belongs to the NusB family.

Involved in transcription antitermination. Required for transcription of ribosomal RNA (rRNA) genes. Binds specifically to the boxA antiterminator sequence of the ribosomal RNA (rrn) operons. This is Transcription antitermination protein NusB from Rhodopseudomonas palustris (strain BisB18).